Reading from the N-terminus, the 1329-residue chain is MLGNITPVSFFKTWVLKKTDVHVMISAREVFPCFIFRVFLLFQVFSRVHTLTNHANFEFEKSLSSCDKPCYNGVCLNKACVCSKGWYGSQCDHCFGRIRISDNASYISDGPLDYSPSAKCTWLIEPENSATPLKIRINSFFTECGWDYLYIYDGDSVYGKQLAALCGEQPSQEFTAASGKALVHFFSDLAINLNGFNVSYESNRCAYNCSNHGSCLNGKCDCEDGYKGLNCEYQVCQLSGKSTESPCHEGQCVDGRCECLSARVHGETCQMPVSSSVWDLIHPTNNAPTGKASHASIAIDDVVWSIGGEFFDGSSDPNNIDVYNVTSRIWSKVEVSGDMPKPRFDHTVVKYKNKLYMFGGVTKTQVRHQTTQAATNELWIFDMGSKKWAQQIHKNETIIAAPFAVAGHSAHVIRSEMFVIFGYNPLFGFMHHVQIYNFETEEWTVANTSDHVYGRFKHSAVEYTTPTGATAILVYGGSMWNNTITDSLMQFDTSTKKWSNLPQSGVQLYLHAAAYLNGLMVVVGGRGSNVTAGSKSECFSNMVQSYDVACKQWSNMSTAPVDLKRFGHSVHVIGQKLYALGGFNGKMKSDVWTLSPAKCSSATRPDECRLITDGTKCVFVDSSCVPFDPTVSYKSSFASMIKSSTPKSFDECTNTPLRLALKTCEEQTDCVSCASKSGCGWCSSGEQCLPNEQECVDGPGMLTSWEKCPQRNSVATMRPCNMENNCGSCRISPHCTWYPIDKASPCVSKEDLSPAFFLVHSRRKGKNRDPNQYQAADMSRVPRAAAFNSLAVVYEYETKSVLADRNKFLSPSHFPSFFRNATECPMPCAQRNNCSDCTDLEQCMWCPSTNRCINLEAYTLSFAYGQCHSWVTSGSGSVINRVCQAESVVCEEHKTCGECQRDPGCGWLADDSKTGLGLCIRGTSTGPLEPKPENSTWYFIDCPACQCNGHSTCFTSVGSFPPVTIEKCQSCQNHTTGAHCERCAPGFYGDARNGGVCSPCDCHHQADMCDPVSGQCFCKTKGVTGDRCDKCEAKYVGNPRNGTPCFYELAVDFIFTFKLRSDDKDNHTSEIYLYSVPYKKDTDVTFQISCESPKGNALVALNMTSSYVNGLADKSQAMMVDTICDSKGFRRVYVASDKGYPFGPDSNTTFFVRVYNFNTPVQIVVSFAQSPPINWVLFFVIFAACFIVLLVVAGLLWMIKVRIEAYRRNQRRIDEIEHMASRPFASTKMELSMLSQFSSAGGPTPLSIEPCSNYRAGVFTLAVRLPTGGKAVTPSGTSGLAVASSLCLLTPQQVGVLQAQDNGESNSGRKSNFRNLLRLTIRQRPNNND.

Positions 65 to 92 constitute an EGF-like 1 domain; the sequence is SCDKPCYNGVCLNKACVCSKGWYGSQCD. 5 disulfides stabilise this stretch: C66–C75, C70–C80, C82–C91, C94–C120, and C144–C166. Positions 94-203 constitute a CUB domain; it reads CFGRIRISDN…NGFNVSYESN (110 aa). N-linked (GlcNAc...) asparagine glycosylation occurs at N103. N-linked (GlcNAc...) asparagine glycosylation is found at N197 and N208. 2 EGF-like domains span residues 204 to 232 and 235 to 270; these read RCAY…LNCE and VCQL…ETCQ. 6 disulfide bridges follow: C205-C215, C209-C220, C222-C231, C236-C252, C247-C257, and C259-C269. 6 Kelch repeats span residues 302 to 353, 355 to 408, 416 to 463, 471 to 518, 520 to 575, and 577 to 619; these read VVWS…KYKN, LYMF…VAGH, EMFV…AVEY, AILV…YLNG, MVVV…VIGQ, and LYAL…KCVF. N-linked (GlcNAc...) asparagine glycosylation is found at N324, N395, N447, N481, N529, and N555. An N-linked (GlcNAc...) asparagine glycan is attached at N820. N-linked (GlcNAc...) asparagine; atypical glycosylation is present at N832. 2 N-linked (GlcNAc...) asparagine glycosylation sites follow: N833 and N934. Disulfide bonds link C945-C953, C947-C968, C971-C980, C983-C997, C1000-C1009, C1002-C1016, C1018-C1028, and C1031-C1045. 2 Laminin EGF-like domains span residues 945 to 999 and 1000 to 1047; these read CQCN…VCSP and CDCH…PCFY. One can recognise an EGF-like 4 domain in the interval 952–998; sequence TCFTSVGSFPPVTIEKCQSCQNHTTGAHCERCAPGFYGDARNGGVCS. N973 is a glycosylation site (N-linked (GlcNAc...) asparagine). N-linked (GlcNAc...) asparagine glycosylation is found at N1066, N1102, and N1147. The helical transmembrane segment at 1176 to 1196 threads the bilayer; sequence VLFFVIFAACFIVLLVVAGLL. The Cytoplasmic portion of the chain corresponds to 1197 to 1329; that stretch reads WMIKVRIEAY…TIRQRPNNND (133 aa).

It is found in the membrane. The chain is Putative protein tag-53 (tag-53) from Caenorhabditis elegans.